A 548-amino-acid polypeptide reads, in one-letter code: Zinc metalloproteinase (548 aa).

The first 28 residues, Met1–Ala28, serve as a signal peptide directing secretion. Residue His362 coordinates Zn(2+). Residue Glu363 is part of the active site. Positions 366 and 386 each coordinate Zn(2+). Residues Ser440–His459 are disordered. The span at Trp442–His459 shows a compositional bias: polar residues. His459 serves as the catalytic Proton donor.

Belongs to the peptidase M4 family. Requires Ca(2+) as cofactor. Zn(2+) serves as cofactor.

It is found in the secreted. The protein localises to the cell wall. Its function is as follows. Zinc metalloprotease with hemolytic properties. This Renibacterium salmoninarum protein is Zinc metalloproteinase (hly).